Consider the following 382-residue polypeptide: MTTNLLDFDLEGLAAFCEQLGQKRFRATQLFRWIHQKGASDFEQMTDLAKSLREKLAVSAHIQGLNVVSRHESADGTIKWLFDVGAGDVIETVFIPETDRGTLCISSQAGCAVGCRFCSTGHQGFSRNLTTGEIISQLWFAEHFLRKHLGRNERVISNVVMMGMGEPLQNYSQLLPALKVMLNDHGYGLSRRRVTVSTSGVVPMIDRLAKDCPVALAVSLHAPQDALRSNLVPLNKKYPIAELLEACTRYQSAAPRDFITFEYCMLDGVNDQPEHARQLVALMKTHAANGLSCKFNLIPFNPFPASGLLRSDMPQVMAFAKILMDAGIITTVRKTRGDDIDAACGQLAGDVQDRTSVDQRMAAQRQGMLGGIKVVVVNGDTA.

E91 (proton acceptor) is an active-site residue. One can recognise a Radical SAM core domain in the interval 97-339 (ETDRGTLCIS…TTVRKTRGDD (243 aa)). C104 and C344 are oxidised to a cystine. [4Fe-4S] cluster contacts are provided by C111, C115, and C118. Residues 165 to 166 (GE), S197, 219 to 221 (SLH), and N301 contribute to the S-adenosyl-L-methionine site. C344 acts as the S-methylcysteine intermediate in catalysis.

The protein belongs to the radical SAM superfamily. RlmN family. It depends on [4Fe-4S] cluster as a cofactor.

It localises to the cytoplasm. It carries out the reaction adenosine(2503) in 23S rRNA + 2 reduced [2Fe-2S]-[ferredoxin] + 2 S-adenosyl-L-methionine = 2-methyladenosine(2503) in 23S rRNA + 5'-deoxyadenosine + L-methionine + 2 oxidized [2Fe-2S]-[ferredoxin] + S-adenosyl-L-homocysteine. The enzyme catalyses adenosine(37) in tRNA + 2 reduced [2Fe-2S]-[ferredoxin] + 2 S-adenosyl-L-methionine = 2-methyladenosine(37) in tRNA + 5'-deoxyadenosine + L-methionine + 2 oxidized [2Fe-2S]-[ferredoxin] + S-adenosyl-L-homocysteine. Its function is as follows. Specifically methylates position 2 of adenine 2503 in 23S rRNA and position 2 of adenine 37 in tRNAs. m2A2503 modification seems to play a crucial role in the proofreading step occurring at the peptidyl transferase center and thus would serve to optimize ribosomal fidelity. The polypeptide is Dual-specificity RNA methyltransferase RlmN (Polaromonas naphthalenivorans (strain CJ2)).